The sequence spans 435 residues: Serine--tRNA ligase (435 aa).

242-244 (TAE) is an L-serine binding site. 273–275 (RSE) is an ATP binding site. Residue Glu-296 participates in L-serine binding. 360–363 (EISS) provides a ligand contact to ATP. Ser-396 contacts L-serine.

The protein belongs to the class-II aminoacyl-tRNA synthetase family. Type-1 seryl-tRNA synthetase subfamily. As to quaternary structure, homodimer. The tRNA molecule binds across the dimer.

It is found in the cytoplasm. The catalysed reaction is tRNA(Ser) + L-serine + ATP = L-seryl-tRNA(Ser) + AMP + diphosphate + H(+). It carries out the reaction tRNA(Sec) + L-serine + ATP = L-seryl-tRNA(Sec) + AMP + diphosphate + H(+). It participates in aminoacyl-tRNA biosynthesis; selenocysteinyl-tRNA(Sec) biosynthesis; L-seryl-tRNA(Sec) from L-serine and tRNA(Sec): step 1/1. Catalyzes the attachment of serine to tRNA(Ser). Is also able to aminoacylate tRNA(Sec) with serine, to form the misacylated tRNA L-seryl-tRNA(Sec), which will be further converted into selenocysteinyl-tRNA(Sec). In Vibrio vulnificus (strain YJ016), this protein is Serine--tRNA ligase.